We begin with the raw amino-acid sequence, 427 residues long: Gamma-glutamyl phosphate reductase (427 aa).

This sequence belongs to the gamma-glutamyl phosphate reductase family.

Its subcellular location is the cytoplasm. It catalyses the reaction L-glutamate 5-semialdehyde + phosphate + NADP(+) = L-glutamyl 5-phosphate + NADPH + H(+). Its pathway is amino-acid biosynthesis; L-proline biosynthesis; L-glutamate 5-semialdehyde from L-glutamate: step 2/2. Its function is as follows. Catalyzes the NADPH-dependent reduction of L-glutamate 5-phosphate into L-glutamate 5-semialdehyde and phosphate. The product spontaneously undergoes cyclization to form 1-pyrroline-5-carboxylate. The protein is Gamma-glutamyl phosphate reductase of Anaeromyxobacter sp. (strain K).